The primary structure comprises 323 residues: Tyrosine--tRNA ligase (323 aa).

Tyrosine 36 is an L-tyrosine binding site. The short motif at 41–49 (PSGEIHLGH) is the 'HIGH' region element. L-tyrosine contacts are provided by tyrosine 158, glutamine 162, aspartate 165, and glutamine 180. A 'KMSKS' region motif is present at residues 214–218 (KMSSS). Serine 217 is an ATP binding site.

The protein belongs to the class-I aminoacyl-tRNA synthetase family. TyrS type 3 subfamily. As to quaternary structure, homodimer.

The protein resides in the cytoplasm. The enzyme catalyses tRNA(Tyr) + L-tyrosine + ATP = L-tyrosyl-tRNA(Tyr) + AMP + diphosphate + H(+). In terms of biological role, catalyzes the attachment of tyrosine to tRNA(Tyr) in a two-step reaction: tyrosine is first activated by ATP to form Tyr-AMP and then transferred to the acceptor end of tRNA(Tyr). This is Tyrosine--tRNA ligase from Archaeoglobus fulgidus (strain ATCC 49558 / DSM 4304 / JCM 9628 / NBRC 100126 / VC-16).